A 180-amino-acid polypeptide reads, in one-letter code: Thebaine synthase 1 (180 aa).

Ser96 provides a ligand contact to thebaine. His111 acts as the Proton acceptor in catalysis. Thebaine is bound at residue Thr127.

It belongs to the MLP family. As to quaternary structure, homodimer (allosteric) and oligomers. As to expression, expressed in poppy latex.

It catalyses the reaction (7S)-O-acetylsalutaridinol = thebaine + acetate + H(+). The protein operates within alkaloid biosynthesis; morphine biosynthesis. Catalyzes the formation of thebaine from (7S)-salutaridinol 7-O-acetate at the expense of labile hydroxylated by-products, which are preferentially produced by spontaneous allylic elimination. This Papaver somniferum (Opium poppy) protein is Thebaine synthase 1.